Reading from the N-terminus, the 799-residue chain is Lon protease 4 (799 aa).

The Lon N-terminal domain occupies 15-204; it reads FPLLPLRTGV…RVAGLLAEAS (190 aa). 356-363 is a binding site for ATP; sequence GPPGVGKT. The Lon proteolytic domain occupies 595–776; it reads TSVAGVATGL…SQVIAAALEE (182 aa). Active-site residues include serine 682 and lysine 725.

It belongs to the peptidase S16 family. Homohexamer. Organized in a ring with a central cavity.

The protein localises to the cytoplasm. The catalysed reaction is Hydrolysis of proteins in presence of ATP.. Functionally, ATP-dependent serine protease that mediates the selective degradation of mutant and abnormal proteins as well as certain short-lived regulatory proteins. Required for cellular homeostasis and for survival from DNA damage and developmental changes induced by stress. Degrades polypeptides processively to yield small peptide fragments that are 5 to 10 amino acids long. Binds to DNA in a double-stranded, site-specific manner. This Sorangium cellulosum (strain So ce56) (Polyangium cellulosum (strain So ce56)) protein is Lon protease 4.